A 340-amino-acid chain; its full sequence is tRNA N6-adenosine threonylcarbamoyltransferase (340 aa).

Fe cation-binding residues include His-111 and His-115. Substrate-binding positions include Val-133–Gly-137, Asp-166, Gly-179, Asp-183, and Asn-272. Asp-300 is a binding site for Fe cation.

This sequence belongs to the KAE1 / TsaD family. Fe(2+) is required as a cofactor.

It is found in the cytoplasm. It carries out the reaction L-threonylcarbamoyladenylate + adenosine(37) in tRNA = N(6)-L-threonylcarbamoyladenosine(37) in tRNA + AMP + H(+). Its function is as follows. Required for the formation of a threonylcarbamoyl group on adenosine at position 37 (t(6)A37) in tRNAs that read codons beginning with adenine. Is involved in the transfer of the threonylcarbamoyl moiety of threonylcarbamoyl-AMP (TC-AMP) to the N6 group of A37, together with TsaE and TsaB. TsaD likely plays a direct catalytic role in this reaction. The polypeptide is tRNA N6-adenosine threonylcarbamoyltransferase (Geobacter sulfurreducens (strain ATCC 51573 / DSM 12127 / PCA)).